The chain runs to 449 residues: MELETHLSKYFTLAFTHKSMGLEMREKLAINSSATLKEFLQTIKNHCPNIKECMVLSTCNRFEIYASLKHGAHANEQKSALLKILAQNKKMSVSDLEKCVLMSVDESAVHHVFSVCSSLDSLVVGETQITGQMKNAYKFAFEEKFCSKDLTRLLHFAFKCAAKVRNLTGISKQGVSISSVAVKEALNIFEKERIKDKKALVIGLGEMAQLVIKHLLNKQFEALILGRNEAKFEDFIKELEEPKKVSFQNIENLNAYINEYQLLFCATSSPHFIVQNDMLKETIFRRFWFDLAVPRNIEKPVLDNIFLYSVDDLEPMVRENVENRQESRTKAYEIVGLATMEFYQWIQSLEVEPLIKDLRELARISAQKELQKALKKRYVPKEYESNIEKILHNAFNTFLHHPTIALKKNAQKEESDVLVGAIKNLFNLDKSSANHAQNLNLYKCEYYEE.

Substrate contacts are provided by residues 58–61 (TCNR), serine 121, 126–128 (ETQ), and glutamine 132. Catalysis depends on cysteine 59, which acts as the Nucleophile. 203 to 208 (GLGEMA) contributes to the NADP(+) binding site.

It belongs to the glutamyl-tRNA reductase family. In terms of assembly, homodimer.

The enzyme catalyses (S)-4-amino-5-oxopentanoate + tRNA(Glu) + NADP(+) = L-glutamyl-tRNA(Glu) + NADPH + H(+). It functions in the pathway porphyrin-containing compound metabolism; protoporphyrin-IX biosynthesis; 5-aminolevulinate from L-glutamyl-tRNA(Glu): step 1/2. Catalyzes the NADPH-dependent reduction of glutamyl-tRNA(Glu) to glutamate 1-semialdehyde (GSA). The sequence is that of Glutamyl-tRNA reductase from Helicobacter pylori (strain Shi470).